A 535-amino-acid chain; its full sequence is Beta-glucosidase 20 (535 aa).

A signal peptide spans methionine 1–alanine 24. A beta-D-glucoside-binding residues include glutamine 56 and histidine 159. Asparagine 187 is a glycosylation site (N-linked (GlcNAc...) asparagine). Position 204 to 205 (asparagine 204 to glutamate 205) interacts with a beta-D-glucoside. The active-site Proton donor is the glutamate 205. Cysteine 224 and cysteine 235 are oxidised to a cystine. A beta-D-glucoside is bound by residues tyrosine 351 and glutamate 424. The active-site Nucleophile is glutamate 424. A glycan (N-linked (GlcNAc...) asparagine) is linked at asparagine 468. A beta-D-glucoside-binding positions include tryptophan 475, glutamate 482–tryptophan 483, and phenylalanine 491. Asparagine 501 carries an N-linked (GlcNAc...) asparagine glycan. A Prevents secretion from ER motif is present at residues histidine 532–leucine 535.

It belongs to the glycosyl hydrolase 1 family.

It is found in the endoplasmic reticulum lumen. The enzyme catalyses Hydrolysis of terminal, non-reducing beta-D-glucosyl residues with release of beta-D-glucose.. The chain is Beta-glucosidase 20 from Arabidopsis thaliana (Mouse-ear cress).